Reading from the N-terminus, the 275-residue chain is Fos-related antigen 1 (275 aa).

Disordered stretches follow at residues 1–33 (MYRD…QTVQ) and 71–115 (TYPQ…VRRE). Positions 7–33 (EPGPSSGAGSAYGRPAQPQQAQTQTVQ) are enriched in low complexity. One can recognise a bZIP domain in the interval 107–170 (EERRRVRRER…ERLELVLEAH (64 aa)). The segment at 109–129 (RRRVRRERNKLAAAKCRNRRK) is basic motif. The leucine-zipper stretch occupies residues 135-163 (LQAETDKLEDEKSGLQREIEELQKQKERL). Residues 171-184 (RPICKIPEEDKKDT) show a composition bias toward basic and acidic residues. The tract at residues 171-275 (RPICKIPEED…PLGSPTLLAL (105 aa)) is disordered. Composition is skewed to low complexity over residues 185-194 (GGTSSTSGAG), 219-237 (LHTP…TPSL), and 256-275 (SSSS…LLAL). Position 269 is a phosphoserine (serine 269).

The protein belongs to the bZIP family. Fos subfamily. In terms of assembly, heterodimer. Interacts with the BAF multiprotein chromatin-remodeling complex subunits SMARCB1 and SMARCD1. Interacts with ARID1A and JUN.

It is found in the nucleus. The chain is Fos-related antigen 1 (Fosl1) from Rattus norvegicus (Rat).